The following is a 338-amino-acid chain: Large ribosomal subunit protein uL10 (338 aa).

A compositionally biased stretch (low complexity) spans 298 to 308; the sequence is AAQQTQTQQST. Residues 298-338 are disordered; sequence AAQQTQTQQSTAEEKKEEKKEEEKKGPSEEEIGSGLASLFG. Residues 309–325 show a composition bias toward basic and acidic residues; sequence AEEKKEEKKEEEKKGPS.

It belongs to the universal ribosomal protein uL10 family. As to quaternary structure, part of the 50S ribosomal subunit. Forms part of the ribosomal stalk which helps the ribosome interact with GTP-bound translation factors. Forms a heptameric L10(L12)2(L12)2(L12)2 complex, where L10 forms an elongated spine to which the L12 dimers bind in a sequential fashion.

Forms part of the ribosomal stalk, playing a central role in the interaction of the ribosome with GTP-bound translation factors. This is Large ribosomal subunit protein uL10 from Saccharolobus islandicus (strain M.16.27) (Sulfolobus islandicus).